We begin with the raw amino-acid sequence, 338 residues long: Cilia- and flagella-associated protein 36 (338 aa).

Positions 142–179 (ISDLEQEEMKLVSEALRLSKEEYEREQLRRSAKELNCT) form a coiled coil. Disordered regions lie at residues 175 to 220 (ELNC…ESPY) and 281 to 314 (KKQE…KKSL). Positions 187–202 (KQSNGSERTPSNTELP) are enriched in polar residues. Residues 255–330 (NLSQAEKEQL…AEKLKEEVIL (76 aa)) are a coiled coil.

This sequence belongs to the CFAP36 family.

Its subcellular location is the nucleus. It localises to the cytoplasm. The protein resides in the cell projection. It is found in the cilium. The protein localises to the flagellum. The sequence is that of Cilia- and flagella-associated protein 36 from Xenopus laevis (African clawed frog).